The following is a 244-amino-acid chain: Glucosamine-6-phosphate deaminase (244 aa).

Residue D67 is the Proton acceptor; for enolization step of the active site. The active-site For ring-opening step is N136. H138 serves as the catalytic Proton acceptor; for ring-opening step. E143 acts as the For ring-opening step in catalysis.

It belongs to the glucosamine/galactosamine-6-phosphate isomerase family. NagB subfamily.

It carries out the reaction alpha-D-glucosamine 6-phosphate + H2O = beta-D-fructose 6-phosphate + NH4(+). The protein operates within amino-sugar metabolism; N-acetylneuraminate degradation; D-fructose 6-phosphate from N-acetylneuraminate: step 5/5. In terms of biological role, catalyzes the reversible isomerization-deamination of glucosamine 6-phosphate (GlcN6P) to form fructose 6-phosphate (Fru6P) and ammonium ion. This Clostridium botulinum (strain ATCC 19397 / Type A) protein is Glucosamine-6-phosphate deaminase.